We begin with the raw amino-acid sequence, 260 residues long: Thrombin-like enzyme bhalternin (260 aa).

The N-terminal stretch at 1–18 (MVLIRVLANLLILQLSYA) is a signal peptide. The propeptide occupies 19–24 (QKASEL). In terms of domain architecture, Peptidase S1 spans 25–251 (VIGGDECNIN…YSEWIQSIIA (227 aa)). 5 disulfides stabilise this stretch: Cys-31–Cys-165, Cys-50–Cys-66, Cys-144–Cys-212, Cys-176–Cys-191, and Cys-202–Cys-227. The N-linked (GlcNAc...) asparagine glycan is linked to Asn-44. N-linked (GlcNAc...) asparagine glycosylation is present at Asn-81.

It belongs to the peptidase S1 family. Snake venom subfamily. In terms of assembly, monomer. Expressed by the venom gland.

It localises to the secreted. Its activity is regulated as follows. Inhibited by benzamidine and partially inhibited by EDTA. Thrombin-like snake venom serine protease that induces blood clotting in vitro, defibrinogenation in vivo (by intraperitoneal injection into mice), albuminolytic and fibrinogenolytic activities. Preferentially cleaves the alpha chain of fibrinogen (FGA). Causes hemolysis in the heart, causes apparent hyperemia and lymphocytic interstitial pneumonitis in the lung, causes necrosis and inflammatory infiltrate in the liver, and causes glomerular congestion in the kidney. Also provokes a drastic myonecrosis. The chain is Thrombin-like enzyme bhalternin from Bothrops alternatus (Urutu).